The primary structure comprises 329 residues: Putative dehydrogenase RB0419 (329 aa).

It belongs to the ornithine cyclodeaminase/mu-crystallin family.

In Rhizobium meliloti (strain 1021) (Ensifer meliloti), this protein is Putative dehydrogenase RB0419.